Consider the following 248-residue polypeptide: Probable transcriptional regulatory protein HCH_04926 (248 aa).

The protein belongs to the TACO1 family.

The protein resides in the cytoplasm. This is Probable transcriptional regulatory protein HCH_04926 from Hahella chejuensis (strain KCTC 2396).